We begin with the raw amino-acid sequence, 138 residues long: Probable histone H2AXb (138 aa).

Residues 1-10 (MSSAGGGGGR) show a composition bias toward gly residues. The segment at 1–24 (MSSAGGGGGRGKSKGSKSVSRSSK) is disordered. Residue serine 135 is modified to Phosphoserine; by ATM and ATR. A [ST]-Q motif motif is present at residues 135-136 (SQ).

Belongs to the histone H2A family. In terms of assembly, the nucleosome is a histone octamer containing two molecules each of H2A, H2B, H3 and H4 assembled in one H3-H4 heterotetramer and two H2A-H2B heterodimers. The octamer wraps approximately 147 bp of DNA. Interacts with numerous proteins required for DNA damage signaling and repair when phosphorylated on Ser-135. In terms of processing, phosphorylated to form H2AXS139ph (gamma-H2AX) in response to DNA double strand breaks (DSBs) generated by exogenous genotoxic agents and by stalled replication forks, and may also occur during meiotic recombination events. Phosphorylation can extend up to several thousand nucleosomes from the actual site of the DSB and may mark the surrounding chromatin for recruitment of proteins required for DNA damage signaling and repair. Widespread phosphorylation may also serve to amplify the damage signal or aid repair of persistent lesions. H2AXS139ph in response to ionizing radiation is mediated by ATM while defects in DNA replication induce H2AXS139ph subsequent to activation of ATR. Dephosphorylation of H2AXS139ph by PP2A is required for DNA DSB repair.

It is found in the nucleus. It localises to the chromosome. Functionally, variant histone H2A which replaces conventional H2A in a subset of nucleosomes. Nucleosomes wrap and compact DNA into chromatin, limiting DNA accessibility to the cellular machineries which require DNA as a template. Histones thereby play a central role in transcription regulation, DNA repair, DNA replication and chromosomal stability. DNA accessibility is regulated via a complex set of post-translational modifications of histones, also called histone code, and nucleosome remodeling. Required for checkpoint-mediated arrest of cell cycle progression in response to low doses of ionizing radiation and for efficient repair of DNA double strand breaks (DSBs) specifically when modified by C-terminal phosphorylation. This Oryza sativa subsp. indica (Rice) protein is Probable histone H2AXb.